The sequence spans 447 residues: DNA primase DnaG (447 aa).

The 75-residue stretch at 200-274 (DSIIVVEGRA…DIDYVARAPE (75 aa)) folds into the Toprim domain. Glutamate 206, aspartate 248, and aspartate 250 together coordinate Mg(2+). The segment at 316–339 (ERRRGGARKQEYTKKGSLNPQPQV) is disordered.

It belongs to the archaeal DnaG primase family. In terms of assembly, forms a ternary complex with MCM helicase and DNA. Component of the archaeal exosome complex. Requires Mg(2+) as cofactor.

The enzyme catalyses ssDNA + n NTP = ssDNA/pppN(pN)n-1 hybrid + (n-1) diphosphate.. In terms of biological role, RNA polymerase that catalyzes the synthesis of short RNA molecules used as primers for DNA polymerase during DNA replication. Also part of the exosome, which is a complex involved in RNA degradation. Acts as a poly(A)-binding protein that enhances the interaction between heteromeric, adenine-rich transcripts and the exosome. The protein is DNA primase DnaG of Pyrococcus furiosus (strain ATCC 43587 / DSM 3638 / JCM 8422 / Vc1).